The chain runs to 428 residues: Aerobic C4-dicarboxylate transport protein (428 aa).

Helical transmembrane passes span 5-27 (LFKS…GHFY), 47-64 (MIIA…IAGM), 77-99 (ALLY…VNVV), 141-163 (VIGA…FGFA), 184-206 (VIFG…AMAF), 219-241 (LGQL…LGSI), 326-348 (IVHQ…GVTG), and 352-374 (IVLA…LILG).

This sequence belongs to the dicarboxylate/amino acid:cation symporter (DAACS) (TC 2.A.23) family.

Its subcellular location is the cell inner membrane. Its function is as follows. Responsible for the aerobic transport of the dicarboxylates fumarate and malate and to a lesser extent succinate, from the periplasm across the inner membrane. The chain is Aerobic C4-dicarboxylate transport protein from Escherichia coli O157:H7.